The sequence spans 73 residues: DNA gyrase inhibitor YacG (73 aa).

C14, C17, C30, and C34 together coordinate Zn(2+). A disordered region spans residues 54–73; it reads AEQADDTAGPGAAEDDTDSH.

This sequence belongs to the DNA gyrase inhibitor YacG family. Interacts with GyrB. Requires Zn(2+) as cofactor.

Inhibits all the catalytic activities of DNA gyrase by preventing its interaction with DNA. Acts by binding directly to the C-terminal domain of GyrB, which probably disrupts DNA binding by the gyrase. This chain is DNA gyrase inhibitor YacG, found in Hyphomonas neptunium (strain ATCC 15444).